Here is a 933-residue protein sequence, read N- to C-terminus: Progesterone receptor (933 aa).

Residues 1-164 form an AF3; mediates transcriptional activation region; it reads MTELKAKGPR…PATQGVLSPL (164 aa). Residues 1–256 form a disordered region; that stretch reads MTELKAKGPR…AAAGGGAAAV (256 aa). The segment at 1–566 is modulating, Pro-Rich; sequence MTELKAKGPR…YSFESLPQKI (566 aa). Position 20 is a phosphoserine (Ser20). Residues 55–59 carry the LXXL motif 1 motif; sequence LDGLL. Phosphoserine is present on Ser81. Positions 115 to 119 match the LXXL motif 2 motif; sequence LETLL. Phosphoserine is present on residues Ser130 and Ser162. Positions 165–305 are mediates transcriptional transrepression; sequence MSRSGGKAGD…LATTVMDFIH (141 aa). A Nuclear localization signal motif is present at residues 183-187; the sequence is KVLPR. A phosphoserine mark is found at Ser190 and Ser213. Positions 220-231 are enriched in acidic residues; that stretch reads EVEEEDGSESEE. Positions 232 to 246 are enriched in low complexity; it reads SAGPLLKGKPRALGG. Residue Ser294 is modified to Phosphoserine; by MAPK1. The disordered stretch occupies residues 331 to 378; it reads GGAGAASAFAPPRSSPSASSTPVAVGDFPDCAYPPDAEPKDDAYPLYS. Low complexity predominate over residues 335-350; that stretch reads AASAFAPPRSSPSASS. Phosphoserine; by MAPK is present on Ser345. Residue Lys388 forms a Glycyl lysine isopeptide (Lys-Gly) (interchain with G-Cter in SUMO); alternate linkage. Lys388 participates in a covalent cross-link: Glycyl lysine isopeptide (Lys-Gly) (interchain with G-Cter in ubiquitin); alternate. Residue Ser400 is modified to Phosphoserine; by CDK2. A disordered region spans residues 415-452; it reads PDFPLGPPPPLPPRAPPSRPGEAAVTAAPASASVSSAS. Over residues 418–433 the composition is skewed to pro residues; sequence PLGPPPPLPPRAPPSR. The span at 434–452 shows a compositional bias: low complexity; it reads PGEAAVTAAPASASVSSAS. The interval 456–546 is AF1; mediates transcriptional activation; that stretch reads STLECILYKA…VYPPYLNYLR (91 aa). Lys531 participates in a covalent cross-link: Glycyl lysine isopeptide (Lys-Gly) (interchain with G-Cter in SUMO). 2 consecutive NR C4-type zinc fingers follow at residues 567–587 and 603–627; these read CLIC…CGSC and CAGR…LRKC. Residues 567–639 constitute a DNA-binding region (nuclear receptor); sequence CLICGDEASG…AGMVLGGRKF (73 aa). Ser676 is subject to Phosphoserine. In terms of domain architecture, NR LBD spans 679–913; sequence QDIQLIPPLI…EFPEMMSEVI (235 aa). Positions 687-933 are AF2; mediates transcriptional activation; it reads LINLLMSIEP…MVKPLLFHKK (247 aa). Arg766 is a progesterone binding site.

This sequence belongs to the nuclear hormone receptor family. In terms of assembly, interacts with SMARD1 and UNC45A. Interacts with CUEDC2; the interaction promotes ubiquitination, decreases sumoylation, and represses transcriptional activity. Interacts with PIAS3; the interaction promotes sumoylation of PR in a hormone-dependent manner, inhibits DNA-binding, and alters nuclear export. Interacts with SP1; the interaction requires ligand-induced phosphorylation on Ser-345 by ERK1/2-MAPK. Interacts with PRMT2. Interacts with NCOA2 and NCOA1. Interacts with KLF9. Interacts with GTF2B. In terms of processing, phosphorylated on multiple serine sites. Several of these sites are hormone-dependent. Phosphorylation on Ser-294 is highly hormone-dependent and modulates ubiquitination and sumoylation on Lys-388. Phosphorylation on Ser-102 and Ser-345 also requires induction by hormone. Basal phosphorylation on Ser-81, Ser-162, Ser-190 and Ser-400 is increased in response to progesterone and can be phosphorylated in vitro by the CDK2-A1 complex. Increased levels of phosphorylation on Ser-400 also in the presence of EGF, heregulin, IGF, PMA and FBS. Phosphorylation at this site by CDK2 is ligand-independent, and increases nuclear translocation and transcriptional activity. Phosphorylation at Ser-162 and Ser-294, but not at Ser-190, is impaired during the G(2)/M phase of the cell cycle. Phosphorylation on Ser-345 by ERK1/2 MAPK is required for interaction with SP1. Sumoylation is hormone-dependent and represses transcriptional activity. Sumoylation on all three sites is enhanced by PIAS3. Desumoylated by SENP1. Sumoylation on Lys-388, the main site of sumoylation, is repressed by ubiquitination on the same site, and modulated by phosphorylation at Ser-294. Post-translationally, ubiquitination is hormone-dependent and represses sumoylation on the same site. Promoted by MAPK-mediated phosphorylation on Ser-294. Ubiquitinated by UBR5, leading to its degradation: UBR5 specifically recognizes and binds ligand-bound PGR when it is not associated with coactivators (NCOAs). In presence of NCOAs, the UBR5-degron is not accessible, preventing its ubiquitination and degradation. In terms of processing, palmitoylated by ZDHHC7 and ZDHHC21. Palmitoylation is required for plasma membrane targeting and for rapid intracellular signaling via ERK and AKT kinases and cAMP generation.

It localises to the nucleus. It is found in the cytoplasm. In terms of biological role, the steroid hormones and their receptors are involved in the regulation of eukaryotic gene expression and affect cellular proliferation and differentiation in target tissues. Transcriptional activator of several progesteron-dependent promoters in a variety of cell types. Involved in activation of SRC-dependent MAPK signaling on hormone stimulation. The chain is Progesterone receptor (PGR) from Gorilla gorilla gorilla (Western lowland gorilla).